Reading from the N-terminus, the 387-residue chain is Protein phosphatase 2C 50 (387 aa).

Residues Val-60–Leu-377 enclose the PPM-type phosphatase domain. Residues Asp-118 and Gly-119 each contribute to the Mn(2+) site. A Modulates binding affinity to PYR/PYL/RCAR abscisic acid intracellular receptors motif is present at residues Val-264–Leu-268. Mn(2+) is bound by residues Asp-306 and Asp-368.

Belongs to the PP2C family. In terms of assembly, interacts with PYL3, PYL5, PYL9 and PYL10. Binding to PYL3, PYL5, PYL9 and PYL10 is dependent on the presence of abscisic acid (ABA). Interacts with SAPK10. The cofactor is Mg(2+). It depends on Mn(2+) as a cofactor.

It carries out the reaction O-phospho-L-seryl-[protein] + H2O = L-seryl-[protein] + phosphate. The catalysed reaction is O-phospho-L-threonyl-[protein] + H2O = L-threonyl-[protein] + phosphate. In terms of biological role, protein phosphatase involved in abscisic acid (ABA) signaling. Together with PYL3 and SAPK10, may form an ABA signaling module involved in stress response. The chain is Protein phosphatase 2C 50 from Oryza sativa subsp. japonica (Rice).